We begin with the raw amino-acid sequence, 110 residues long: uncharacterized protein (110 aa).

This is an uncharacterized protein from Schizosaccharomyces pombe (strain 972 / ATCC 24843) (Fission yeast).